A 791-amino-acid chain; its full sequence is Probable phosphoketolase (791 aa).

The protein belongs to the XFP family. Requires thiamine diphosphate as cofactor.

This is Probable phosphoketolase from Pseudomonas putida (strain ATCC 700007 / DSM 6899 / JCM 31910 / BCRC 17059 / LMG 24140 / F1).